The primary structure comprises 462 residues: MSSRSPKDLIKSKWGSRPSSSKSDTALEKFKGEIAAFKTSLDEITSGKGKMAEKGRSRLLEKIQVLEAEREKNVYYLLEKDKEIQRLKDHLRSRYSSSSLFEQLEEKTKECEKKQQLLESLSKETDVLKNQLSATTKRLSELESKASTLHLSQSMPANCFNSSMNSIHEKEMQLKDALEKNQQWLVYDQQREAYVKGLLAKIFELEKRTETAAASLTQQMKKIESEGYLQVEKQKYDHLLENAKKDLEVERQAVTQLRLELDEFRRKYEEARKEVEDLNQLLSSQRKADIQHLEEDKQKTERIQKLREESSIFKGKLEEERKRSEELLSQVRILYDSLLKHQEEQARVALLEQQMQACTLDFENEKLDRQNMQHQLYVILKELRKAKSQITQLESLKQLHGFTITEQPFPLQREPESRVKATSPKSPSAALNDSLVECPKCSVQYPATEHRDLLVHVEYCMK.

The segment covering 1–11 (MSSRSPKDLIK) has biased composition (basic and acidic residues). The disordered stretch occupies residues 1-26 (MSSRSPKDLIKSKWGSRPSSSKSDTA). Over residues 12-23 (SKWGSRPSSSKS) the composition is skewed to low complexity. Residues 50 to 400 (KMAEKGRSRL…TQLESLKQLH (351 aa)) adopt a coiled-coil conformation. Phosphoserine occurs at positions 96 and 99. Residues 157 to 235 (ANCFNSSMNS…EGYLQVEKQK (79 aa)) are interaction with TSG101. The interval 160–214 (FNSSMNSIHEKEMQLKDALEKNQQWLVYDQQREAYVKGLLAKIFELEKRTETAAA) is interaction with PDCD6IP. Residues 354–462 (QMQACTLDFE…LLVHVEYCMK (109 aa)) form a required for localization to the interphase centrosome and to the midbody during cytokinesis region. The segment at 410 to 430 (PLQREPESRVKATSPKSPSAA) is disordered. 3 positions are modified to phosphoserine: serine 423, serine 426, and serine 428. Position 434 is a phosphoserine; by PLK1 (serine 434).

As to quaternary structure, homodimer. Interacts (phosphorylated on Ser-423 and Ser-426) with PLK1; the interaction is indirect via the MTMR3:MTMR4 heterooligomer, occurs during early mitosis, regulates the phosphorylation of CEP55 by PLK1 and its recruitment to the midbody where it can mediate cell abscission. Interacts with AKAP9/CG-NAP; the interaction occurs in interphase and is lost upon mitotic entry. Interacts with PCNT/Kendrin; the interaction occurs in interphase and is lost upon mitotic entry. Directly interacts with PDCD6IP; this interaction is required for PDCD6IP targeting to the midbody; CEP55 binds PDCD6IP in a 2:1 stoichiometry; PDCD6IP competes with TSG101 for the same binding site. Interacts with TSG101; TSG101 competes with PDCD6IP for the same binding site; interaction is required for cytokinesis. Interacts with MVB12A, VPS37B, VPS37C and VPS28. In terms of processing, there is a hierachy of phosphorylation, where both Ser-423 and Ser-426 are phosphorylated at the onset of mitosis, prior to Ser-434. Phosphorylation at Ser-423 and Ser-426 is required for dissociation from the centrosome at the G2/M boundary. Phosphorylation at the 3 sites, Ser-423, Ser-426 and Ser-434, is required for protein function at the final stages of cell division to complete cytokinesis successfully.

The protein resides in the cytoplasm. The protein localises to the cytoskeleton. It is found in the microtubule organizing center. It localises to the centrosome. Its subcellular location is the centriole. The protein resides in the cleavage furrow. The protein localises to the midbody. It is found in the midbody ring. Its function is as follows. Plays a role in mitotic exit and cytokinesis. Recruits PDCD6IP and TSG101 to midbody during cytokinesis. Required for successful completion of cytokinesis. Not required for microtubule nucleation. Plays a role in the development of the brain and kidney. This Mus musculus (Mouse) protein is Centrosomal protein of 55 kDa.